A 713-amino-acid polypeptide reads, in one-letter code: Nuclear poly(A) polymerase 1 (713 aa).

Residues phenylalanine 91–serine 93, alanine 103–aspartate 106, aspartate 159, tyrosine 229, and glycine 238–isoleucine 239 each bind ATP. 3 residues coordinate Mg(2+): aspartate 104, aspartate 106, and aspartate 159. A disordered region spans residues phenylalanine 480–lysine 555. The segment covering serine 507 to serine 526 has biased composition (low complexity).

Belongs to the poly(A) polymerase family. Monomer. Forms a complex with cleavage and polyadenylation specificity factor (CPSF) subunit PAPS4. It depends on Mg(2+) as a cofactor. The cofactor is Mn(2+). Expressed in stems, cotyledons, hypocotyls, radicle, leaves, and, to a lower extent, in roots (including primary and secondary roots as well as root tips) and flowers. In radicle, roots and leaves, mainly present in vascular tissues.

It is found in the nucleus. It carries out the reaction RNA(n) + ATP = RNA(n)-3'-adenine ribonucleotide + diphosphate. Essential protein. Polymerase that creates the 3'-poly(A) tail of mRNA's. Also required for the endoribonucleolytic cleavage reaction at some polyadenylation sites. May acquire specificity through interaction with a cleavage and polyadenylation specificity factor (CPSF) at its C-terminus. This is Nuclear poly(A) polymerase 1 from Arabidopsis thaliana (Mouse-ear cress).